The chain runs to 540 residues: Chaperonin GroEL 3 (540 aa).

ATP contacts are provided by residues 30–33 (TLGP), K51, 87–91 (DGTTT), G415, 480–482 (NAA), and D496.

The protein belongs to the chaperonin (HSP60) family. In terms of assembly, forms a cylinder of 14 subunits composed of two heptameric rings stacked back-to-back. Interacts with the co-chaperonin GroES.

The protein localises to the cytoplasm. It carries out the reaction ATP + H2O + a folded polypeptide = ADP + phosphate + an unfolded polypeptide.. In terms of biological role, together with its co-chaperonin GroES, plays an essential role in assisting protein folding. The GroEL-GroES system forms a nano-cage that allows encapsulation of the non-native substrate proteins and provides a physical environment optimized to promote and accelerate protein folding. This is Chaperonin GroEL 3 from Bradyrhizobium sp. (strain BTAi1 / ATCC BAA-1182).